A 382-amino-acid chain; its full sequence is D-galactonate dehydratase (382 aa).

A Mg(2+)-binding site is contributed by Asp183. The active-site Proton donor is the His185. Glu209 and Glu235 together coordinate Mg(2+). Catalysis depends on His285, which acts as the Proton acceptor. The tract at residues 361-382 (NENPPDWRNPVWRHSDGSIAEW) is disordered.

Belongs to the mandelate racemase/muconate lactonizing enzyme family. GalD subfamily. Mg(2+) serves as cofactor.

The enzyme catalyses D-galactonate = 2-dehydro-3-deoxy-D-galactonate + H2O. It participates in carbohydrate acid metabolism; D-galactonate degradation; D-glyceraldehyde 3-phosphate and pyruvate from D-galactonate: step 1/3. Functionally, catalyzes the dehydration of D-galactonate to 2-keto-3-deoxy-D-galactonate. The sequence is that of D-galactonate dehydratase from Xanthomonas euvesicatoria pv. vesicatoria (strain 85-10) (Xanthomonas campestris pv. vesicatoria).